The chain runs to 229 residues: LexA repressor (229 aa).

Positions 26 to 46 (FDEMKEALDLASKSGIHRLIT) form a DNA-binding region, H-T-H motif. Catalysis depends on for autocatalytic cleavage activity residues serine 149 and lysine 187.

Belongs to the peptidase S24 family. In terms of assembly, homodimer.

It catalyses the reaction Hydrolysis of Ala-|-Gly bond in repressor LexA.. Represses a number of genes involved in the response to DNA damage (SOS response), including recA and lexA. In the presence of single-stranded DNA, RecA interacts with LexA causing an autocatalytic cleavage which disrupts the DNA-binding part of LexA, leading to derepression of the SOS regulon and eventually DNA repair. The sequence is that of LexA repressor from Phenylobacterium zucineum (strain HLK1).